Reading from the N-terminus, the 218-residue chain is DNA-binding protein HU 2 (218 aa).

A bacterial histone-like domain region spans residues 1–91 (MNKAQLVEAI…QGFKDLVSGS (91 aa)). The tract at residues 101–218 (VKKAPKGSLS…TAKKATARKK (118 aa)) is disordered. A degenerate repeats region region spans residues 118–218 (KAAGKKAAAK…TAKKATARKK (101 aa)). Residues 127-161 (KKATGAAKKTTGAAKKTSAAAKKTTAKKTTGAAKT) are compositionally biased toward low complexity. Residues 162 to 172 (TAKKTTAKKSA) are compositionally biased toward basic residues. A compositionally biased stretch (low complexity) spans 173–182 (AKTTTAAAKK). Basic residues predominate over residues 183-218 (TAAKKAPAKKATAKKAPAKKSTARKTTAKKATARKK).

This sequence belongs to the bacterial histone-like protein family. Long actinobacterial subfamily. As to quaternary structure, homodimer.

It localises to the cytoplasm. The protein resides in the nucleoid. In terms of biological role, histone-like DNA-binding protein which is capable of wrapping DNA to stabilize it, and thus to prevent its denaturation under extreme environmental conditions. This Streptomyces coelicolor (strain ATCC BAA-471 / A3(2) / M145) protein is DNA-binding protein HU 2 (hup2).